The primary structure comprises 127 residues: Mu-like prophage FluMu protein gp41 (127 aa).

Residues 107 to 127 form a disordered region; that stretch reads VSRGRLDTADQETGKDLSAVS. The span at 110 to 121 shows a compositional bias: basic and acidic residues; that stretch reads GRLDTADQETGK.

The protein to phage Mu protein gp41.

The sequence is that of Mu-like prophage FluMu protein gp41 from Haemophilus influenzae (strain ATCC 51907 / DSM 11121 / KW20 / Rd).